A 306-amino-acid chain; its full sequence is Pantothenate kinase (306 aa).

Glycine 91–serine 98 serves as a coordination point for ATP.

This sequence belongs to the prokaryotic pantothenate kinase family.

The protein resides in the cytoplasm. The enzyme catalyses (R)-pantothenate + ATP = (R)-4'-phosphopantothenate + ADP + H(+). The protein operates within cofactor biosynthesis; coenzyme A biosynthesis; CoA from (R)-pantothenate: step 1/5. This Streptococcus pyogenes serotype M3 (strain ATCC BAA-595 / MGAS315) protein is Pantothenate kinase (coaA).